The sequence spans 267 residues: Cell division protein FtsQ (267 aa).

Topologically, residues 1–32 (MRKKTSSNKKKQTKKTNNISLRRKLRLIYKKA) are cytoplasmic. Residues 33–53 (ILGLKIALIIFVCLFVFTKYF) form a helical membrane-spanning segment. The Periplasmic portion of the chain corresponds to 54 to 267 (AGIKTYLTTN…DKNKYYIEKY (214 aa)). A POTRA domain is found at 73 to 141 (FKLENVIIEG…NTVYIKLFER (69 aa)).

This sequence belongs to the FtsQ/DivIB family. FtsQ subfamily.

It localises to the cell inner membrane. Its function is as follows. Essential cell division protein. In Rickettsia felis (strain ATCC VR-1525 / URRWXCal2) (Rickettsia azadi), this protein is Cell division protein FtsQ.